We begin with the raw amino-acid sequence, 432 residues long: Transcriptional adapter 3-B (432 aa).

2 disordered regions span residues 90–124 (HELG…PKSR) and 275–315 (SPVE…KSLE). Over residues 293 to 305 (DGASTSPRSQNKP) the composition is skewed to polar residues. Positions 335–398 (ADDSEDEVLA…NEVMDAFRKI (64 aa)) form a coiled coil.

The protein belongs to the NGG1 family.

It localises to the nucleus. Functionally, functions as a component of the PCAF complex. The PCAF complex is capable of efficiently acetylating histones in a nucleosomal context. The protein is Transcriptional adapter 3-B (tada3-b) of Xenopus laevis (African clawed frog).